A 212-amino-acid chain; its full sequence is MTKMHRYAAIAALAIFLSGCMAQRQPAPVEEVKPAPEQPAQPPQPPVVPSVPTIPQQPGPIEHEDQTGQPAPKVRHYDWNGAMQPLVSKMLQADGVTAGSVLLVDSVNNRTNGSLNANEATETLRNALANNGKFTLVSVQQLSMAKQQLGLSPQDSLGTRSKAIGIARNVGAQYVLYSSASGNVNAPALQMQLMLVQTGEIIWSGKGAVQQQ.

An N-terminal signal peptide occupies residues 1 to 19 (MTKMHRYAAIAALAIFLSG). Cys20 is lipidated: N-palmitoyl cysteine. The S-diacylglycerol cysteine moiety is linked to residue Cys20. Positions 28-73 (PVEEVKPAPEQPAQPPQPPVVPSVPTIPQQPGPIEHEDQTGQPAPK) are disordered. Positions 36–49 (PEQPAQPPQPPVVP) are enriched in pro residues.

It belongs to the LpoB family. In terms of assembly, interacts with PBP1b.

The protein localises to the cell outer membrane. Functionally, regulator of peptidoglycan synthesis that is essential for the function of penicillin-binding protein 1B (PBP1b). The chain is Penicillin-binding protein activator LpoB from Salmonella typhimurium (strain LT2 / SGSC1412 / ATCC 700720).